Consider the following 215-residue polypeptide: Adenylate kinase (215 aa).

Gly10–Thr15 provides a ligand contact to ATP. Residues Ser30–Val59 form an NMP region. AMP is bound by residues Thr31, Arg36, Glu57–Val59, Gly85–Arg88, and Gln92. The interval Gly126 to Asp163 is LID. Position 127 (Arg127) interacts with ATP. Zn(2+)-binding residues include Cys130 and Cys133. ATP is bound at residue Thr136–Tyr137. The Zn(2+) site is built by Cys150 and Asp153. Residues Arg160 and Arg171 each coordinate AMP. An ATP-binding site is contributed by Lys199.

The protein belongs to the adenylate kinase family. Monomer.

It is found in the cytoplasm. The catalysed reaction is AMP + ATP = 2 ADP. It participates in purine metabolism; AMP biosynthesis via salvage pathway; AMP from ADP: step 1/1. Catalyzes the reversible transfer of the terminal phosphate group between ATP and AMP. Plays an important role in cellular energy homeostasis and in adenine nucleotide metabolism. This Staphylococcus epidermidis (strain ATCC 35984 / DSM 28319 / BCRC 17069 / CCUG 31568 / BM 3577 / RP62A) protein is Adenylate kinase.